We begin with the raw amino-acid sequence, 510 residues long: Probable cytochrome P450 517A2 (510 aa).

A helical transmembrane segment spans residues 1–21; the sequence is MRILIIIILIIIVFLVKDTIK. Cysteine 450 lines the heme pocket.

The protein belongs to the cytochrome P450 family. Requires heme as cofactor.

It localises to the membrane. In Dictyostelium discoideum (Social amoeba), this protein is Probable cytochrome P450 517A2 (cyp517A2).